A 517-amino-acid chain; its full sequence is Probable G-protein coupled receptor Mth-like 4 (517 aa).

The first 18 residues, 1–18 (MRILLIAVLFLLMPKSNA), serve as a signal peptide directing secretion. Over 19 to 212 (EIPGCDFFDT…LSSEHSRTWK (194 aa)) the chain is Extracellular. 5 disulfide bridges follow: C23–C77, C79–C84, C88–C183, C89–C100, and C145–C201. N-linked (GlcNAc...) asparagine glycosylation is present at N39. 2 N-linked (GlcNAc...) asparagine glycosylation sites follow: N117 and N165. A helical transmembrane segment spans residues 213–233 (TVAIVISLICIILTISVYLYV). Residues 234–242 (EKLRNLHGK) lie on the Cytoplasmic side of the membrane. The helical transmembrane segment at 243 to 263 (CFICYLASLFLGYFFLVLNVW) threads the bilayer. Topologically, residues 264–272 (KYSSGFCVT) are extracellular. The chain crosses the membrane as a helical span at residues 273–293 (AGFLGYFSVMAAFFWLSVIGI). The Cytoplasmic segment spans residues 294 to 319 (HLRIKFSLASNCLHRLLPENPFRAYN). A helical membrane pass occupies residues 320 to 340 (LYAWGIPLIMTAITYTADQVV). At 341-363 (KNEKLRPRVGVGKNCWIYTGDMT) the chain is on the extracellular side. The chain crosses the membrane as a helical span at residues 364 to 384 (VMIYFYGPMLLLIAFNIIMFV). The Cytoplasmic portion of the chain corresponds to 385–414 (LSAIYIYNIKKNVKGLVHKQQTNQQINDQQ). The chain crosses the membrane as a helical span at residues 415–435 (MFAIFLRLFILMGLSWSFEIL). The Extracellular portion of the chain corresponds to 436 to 459 (SFLLTKQQAWARALMVADYFNWSQ). N456 carries N-linked (GlcNAc...) asparagine glycosylation. The helical transmembrane segment at 460–480 (GTIIFVLFILKPSILKLIIAG) threads the bilayer. At 481 to 517 (GRQNLPGSHHNSRSKAARYNSTHTACEGSIADPNAYC) the chain is on the cytoplasmic side.

It belongs to the G-protein coupled receptor 2 family. Mth subfamily.

Its subcellular location is the cell membrane. This is Probable G-protein coupled receptor Mth-like 4 (mthl4) from Drosophila melanogaster (Fruit fly).